The primary structure comprises 540 residues: Alanine aminotransferase 2, mitochondrial (540 aa).

The transit peptide at 1-46 (MRRFLINQAKGLVDHSRRQHHHKSPSFLSPQPRPLASSPPALSRFF) directs the protein to the mitochondrion. A disordered region spans residues 11–40 (GLVDHSRRQHHHKSPSFLSPQPRPLASSPP). The segment covering 28 to 40 (LSPQPRPLASSPP) has biased composition (low complexity). Lysine 357 bears the N6-(pyridoxal phosphate)lysine mark.

Belongs to the class-I pyridoxal-phosphate-dependent aminotransferase family. Alanine aminotransferase subfamily. Homodimer. Pyridoxal 5'-phosphate serves as cofactor. In terms of processing, the N-terminus is blocked. As to expression, expressed in shoots, essentially in leaves and flowers, mostly in vascular tissues. Also detected in stems and roots.

It localises to the mitochondrion. It catalyses the reaction L-alanine + 2-oxoglutarate = pyruvate + L-glutamate. It functions in the pathway photosynthesis; C4 acid pathway. Its pathway is amino-acid degradation; L-alanine degradation via transaminase pathway; pyruvate from L-alanine: step 1/1. The protein is Alanine aminotransferase 2, mitochondrial (ALAAT2) of Arabidopsis thaliana (Mouse-ear cress).